A 302-amino-acid polypeptide reads, in one-letter code: Methionyl-tRNA formyltransferase (302 aa).

107 to 110 (SDLP) serves as a coordination point for (6S)-5,6,7,8-tetrahydrofolate.

Belongs to the Fmt family.

It catalyses the reaction L-methionyl-tRNA(fMet) + (6R)-10-formyltetrahydrofolate = N-formyl-L-methionyl-tRNA(fMet) + (6S)-5,6,7,8-tetrahydrofolate + H(+). In terms of biological role, attaches a formyl group to the free amino group of methionyl-tRNA(fMet). The formyl group appears to play a dual role in the initiator identity of N-formylmethionyl-tRNA by promoting its recognition by IF2 and preventing the misappropriation of this tRNA by the elongation apparatus. The polypeptide is Methionyl-tRNA formyltransferase (Rickettsia massiliae (strain Mtu5)).